A 345-amino-acid polypeptide reads, in one-letter code: Serine proteinase inhibitor 2 (345 aa).

It belongs to the serpin family. Poxviruses subfamily.

The protein localises to the host cytoplasm. Its function is as follows. Viral serpin that inhibits both cysteine and serine proteinases involved in the regulation of host inflammatory and apoptosis processes. Major anti-apoptotic protein which inhibits both intrinsic and extrinsic pathways and strongly cleaves host CASP1 and CASP8 but is a rather poor inhibitor of host CASP3. Prevents the proteolytic activity of host interleukin-1-beta converting enzyme (ICE) and ICE-like enzymes. Can also block apoptosis through host tumor necrosis factor (TNF) receptor. The inhibition of host ICE is an example of a 'cross-class' interaction, in which a serpin inhibits a non-serine proteinase. Also inhibits granzyme B. The chain is Serine proteinase inhibitor 2 (OPG199) from Rabbitpox virus (strain Utrecht) (RPV).